The following is a 234-amino-acid chain: uncharacterized protein (234 aa).

This is an uncharacterized protein from Escherichia coli (strain K12).